The following is a 483-amino-acid chain: Proline--tRNA ligase (483 aa).

The protein belongs to the class-II aminoacyl-tRNA synthetase family. ProS type 3 subfamily. Homodimer.

The protein localises to the cytoplasm. It carries out the reaction tRNA(Pro) + L-proline + ATP = L-prolyl-tRNA(Pro) + AMP + diphosphate. Its function is as follows. Catalyzes the attachment of proline to tRNA(Pro) in a two-step reaction: proline is first activated by ATP to form Pro-AMP and then transferred to the acceptor end of tRNA(Pro). The sequence is that of Proline--tRNA ligase from Sulfurisphaera tokodaii (strain DSM 16993 / JCM 10545 / NBRC 100140 / 7) (Sulfolobus tokodaii).